The following is a 701-amino-acid chain: Probable cytosolic oligopeptidase A (701 aa).

Alanine 2 carries the post-translational modification N-acetylalanine. Residues isoleucine 148–glutamate 194 adopt a coiled-coil conformation. Histidine 483 contributes to the Zn(2+) binding site. The active site involves glutamate 484. Zn(2+) contacts are provided by histidine 487 and glutamate 513. Histidine 615–tyrosine 621 provides a ligand contact to substrate.

This sequence belongs to the peptidase M3 family. Zn(2+) serves as cofactor.

It is found in the cytoplasm. The protein resides in the cytosol. The catalysed reaction is Hydrolysis of oligopeptides, with broad specificity. Gly or Ala commonly occur as P1 or P1' residues, but more distant residues are also important, as is shown by the fact that Z-Gly-Pro-Gly-|-Gly-Pro-Ala is cleaved, but not Z-(Gly)(5).. Its activity is regulated as follows. Inhibited by salicylic acid. Functionally, oligopeptidase that may be involved in the degradation of proteasome-generated peptides. Binds salicylic acid. This chain is Probable cytosolic oligopeptidase A, found in Arabidopsis thaliana (Mouse-ear cress).